The following is a 323-amino-acid chain: tRNA U34 carboxymethyltransferase (323 aa).

Carboxy-S-adenosyl-L-methionine is bound by residues lysine 91, tryptophan 105, lysine 110, glycine 130, 181–182 (IE), methionine 196, tyrosine 200, and arginine 315.

Belongs to the class I-like SAM-binding methyltransferase superfamily. CmoB family. Homotetramer.

The catalysed reaction is carboxy-S-adenosyl-L-methionine + 5-hydroxyuridine(34) in tRNA = 5-carboxymethoxyuridine(34) in tRNA + S-adenosyl-L-homocysteine + H(+). In terms of biological role, catalyzes carboxymethyl transfer from carboxy-S-adenosyl-L-methionine (Cx-SAM) to 5-hydroxyuridine (ho5U) to form 5-carboxymethoxyuridine (cmo5U) at position 34 in tRNAs. The chain is tRNA U34 carboxymethyltransferase from Serratia proteamaculans (strain 568).